The sequence spans 260 residues: HTH-type transcriptional repressor NanR (260 aa).

The region spanning 27–95 is the HTH gntR-type domain; sequence KKLSEMVEEE…NGERARISRP (69 aa). A DNA-binding region (H-T-H motif) is located at residues 55–74; the sequence is ERELMAFFNVGRPSVREALA.

The protein belongs to the NanR family.

Its function is as follows. Transcriptional repressor that controls expression of the genes required for the catabolism of sialic acids. This Edwardsiella tarda (strain FL6-60) protein is HTH-type transcriptional repressor NanR.